A 1426-amino-acid chain; its full sequence is ABC transporter G family member 31 (1426 aa).

N-linked (GlcNAc...) asparagine glycans are attached at residues Asn6 and Asn150. Positions 160–434 constitute an ABC transporter 1 domain; sequence LSSLRIIKPR…FESLGFRLPP (275 aa). 193–200 contributes to the ATP binding site; sequence GPPGSGKS. A glycan (N-linked (GlcNAc...) asparagine) is linked at Asn219. Thr276 is subject to Phosphothreonine. The 214-residue stretch at 512–725 folds into the ABC transmembrane type-2 1 domain; sequence ENLKVCFVRE…GQRAIAVNEF (214 aa). The next 6 membrane-spanning stretches (helical) occupy residues 530-550, 569-589, 618-638, 649-669, 675-695, and 760-780; these read FLYT…ATVF, CLFF…PLMI, VPYS…TVGL, MLLL…MASL, IANT…GFVI, and IGIA…TLAL. Residues 826-1078 enclose the ABC transporter 2 domain; the sequence is MTFHNVNYYV…VLVDYFQGIN (253 aa). An N-linked (GlcNAc...) asparagine glycan is attached at Asn856. Position 871–878 (871–878) interacts with ATP; it reads GSSGAGKT. Positions 1151-1365 constitute an ABC transmembrane type-2 2 domain; it reads SQFLLCLWKQ…TLQGVILSQL (215 aa). The next 7 helical transmembrane spans lie at 1172–1192, 1202–1222, 1258–1278, 1285–1305, 1315–1335, 1342–1362, and 1396–1416; these read LVRL…FWDI, LITV…SNAS, IPYI…TIGF, FVLY…YGMM, LAAV…GFLV, VWWI…GVIL, and IGVS…AFAL.

This sequence belongs to the ABC transporter superfamily. ABCG family. PDR (TC 3.A.1.205) subfamily. Expressed in seedlings, stems, leaves, siliques and inflorescence. In seeds, confined to the endosperm. Highly expressed in the tapetum of anthers.

It is found in the cell membrane. The enzyme catalyses abscisate(in) + ATP + H2O = abscisate(out) + ADP + phosphate + H(+). In terms of biological role, together with ABCG25, export abscisic acid (ABA) from the endosperm to deliver it to the embryo via ABCG30 and ABCG40-mediated import to suppress radicle extension and subsequent embryonic growth. Together with ABCG9, involved in pollen coat deposition of steryl glycosides required for pollen fitness. May be a general defense protein. The protein is ABC transporter G family member 31 of Arabidopsis thaliana (Mouse-ear cress).